The primary structure comprises 308 residues: MTALQHVAVLMGGWSSEREVSLRSGAACAAALERKGYRVTRIDVQRDIATVLQNLKPDVALVMLHGKPGEDGTIQGVLETLGIPYSHSGVLSSSLAMRKDLAKTVMATAGVPVAEGLTLTRAEIAKAHVMAPPYVIKPVADGSSVGVFIVTEDQAHPPQELFRDDWPHGEELLVEKYIAGRELTCAVIKGEASDVIEIVPLLKFYDYEAKYSKGASKHVLPAPVLPFVYQEVRRLTLAAHGALGCRGVSRADFRYDDRIEGTGGLVCLEVNTQPGMTETSLVPELAGYAGVAFDELVQWMVEDASLDR.

In terms of domain architecture, ATP-grasp spans 103–302; sequence KTVMATAGVP…FDELVQWMVE (200 aa). 130–184 contacts ATP; the sequence is MAPPYVIKPVADGSSVGVFIVTEDQAHPPQELFRDDWPHGEELLVEKYIAGRELT. D252, E269, and N271 together coordinate Mg(2+).

This sequence belongs to the D-alanine--D-alanine ligase family. Mg(2+) is required as a cofactor. The cofactor is Mn(2+).

The protein localises to the cytoplasm. The catalysed reaction is 2 D-alanine + ATP = D-alanyl-D-alanine + ADP + phosphate + H(+). The protein operates within cell wall biogenesis; peptidoglycan biosynthesis. Functionally, cell wall formation. The polypeptide is D-alanine--D-alanine ligase (Afipia carboxidovorans (strain ATCC 49405 / DSM 1227 / KCTC 32145 / OM5) (Oligotropha carboxidovorans)).